The chain runs to 121 residues: Small ribosomal subunit protein uS13 (121 aa).

A disordered region spans residues 94 to 121 (GLPVRGQNTKNNARTRKGKAVAIAGKKK). Residues 106–121 (ARTRKGKAVAIAGKKK) are compositionally biased toward basic residues.

This sequence belongs to the universal ribosomal protein uS13 family. Part of the 30S ribosomal subunit. Forms a loose heterodimer with protein S19. Forms two bridges to the 50S subunit in the 70S ribosome.

Its function is as follows. Located at the top of the head of the 30S subunit, it contacts several helices of the 16S rRNA. In the 70S ribosome it contacts the 23S rRNA (bridge B1a) and protein L5 of the 50S subunit (bridge B1b), connecting the 2 subunits; these bridges are implicated in subunit movement. Contacts the tRNAs in the A and P-sites. The protein is Small ribosomal subunit protein uS13 of Streptococcus sanguinis (strain SK36).